A 535-amino-acid chain; its full sequence is Ankyrin repeat domain-containing protein 34C (535 aa).

ANK repeat units follow at residues 10 to 39 (TDGN…YINE), 43 to 80 (KGET…DPNI), 84 to 114 (SGKT…DPSL), and 118 to 147 (TGAS…AKGK). 2 disordered regions span residues 159-181 (SGTK…DRHS) and 214-237 (AGHP…RKVS). Polar residues predominate over residues 216-225 (HPSSCNTSKA). Ser301 is modified (phosphoserine). Residues 381–444 (DLDIQPGPDP…RRRPPHLLER (64 aa)) form a disordered region. Ser447 bears the Phosphoserine mark.

Belongs to the ANKRD34 family.

The sequence is that of Ankyrin repeat domain-containing protein 34C (ANKRD34C) from Homo sapiens (Human).